We begin with the raw amino-acid sequence, 157 residues long: MTEDAKTSLSSADIIEIMKLLPHRYPFLMVDRIIEIDSDNSAIGIKNVTANEPQFTGHFPGSPIMPGVLLIEGMAQTAGAICARKDGIGGNLVYFMTIDNARFRKPVVPGDRVEFHVVKQKQRGTIWKFHCDAKVDGSVVAEADIGAMIVRKDPDQA.

The active site involves His58.

It belongs to the thioester dehydratase family. FabZ subfamily.

Its subcellular location is the cytoplasm. It catalyses the reaction a (3R)-hydroxyacyl-[ACP] = a (2E)-enoyl-[ACP] + H2O. Its function is as follows. Involved in unsaturated fatty acids biosynthesis. Catalyzes the dehydration of short chain beta-hydroxyacyl-ACPs and long chain saturated and unsaturated beta-hydroxyacyl-ACPs. In Rhizobium rhizogenes (strain K84 / ATCC BAA-868) (Agrobacterium radiobacter), this protein is 3-hydroxyacyl-[acyl-carrier-protein] dehydratase FabZ.